A 343-amino-acid chain; its full sequence is L-rhamnose-proton symporter (343 aa).

10 consecutive transmembrane segments (helical) span residues 4–24, 38–58, 68–88, 101–121, 137–157, 175–195, 207–227, 254–274, 289–309, and 320–340; these read AIIL…CFYA, WSIG…YLLL, FSIA…IGNI, MGIG…TPIL, TLLG…AGLL, LILA…MDAA, INSL…GAII, LLIT…LQFF, MSWM…GLLL, and VAVL…VGLG.

This sequence belongs to the L-rhamnose transporter (TC 2.A.7.6) family.

The protein localises to the cell inner membrane. It catalyses the reaction L-rhamnopyranose(in) + H(+)(in) = L-rhamnopyranose(out) + H(+)(out). Functionally, uptake of L-rhamnose across the cytoplasmic membrane with the concomitant transport of protons into the cell (symport system). This chain is L-rhamnose-proton symporter, found in Yersinia pestis bv. Antiqua (strain Antiqua).